The sequence spans 539 residues: Chaperone Ric-8A (539 aa).

The segment at 506–539 is disordered; it reads PMGVTSDGRLGPLDEAAQKMLQRQESSDLDSDSD.

Belongs to the synembryn family.

Its subcellular location is the cytoplasm. It localises to the cell cortex. In terms of biological role, chaperone that specifically binds and folds nascent G alpha proteins prior to G protein heterotrimer formation, promoting their stability and activity: folds GNAI1, GNAO1, GNA13 and GNAQ. Does not fold G(s) G-alpha proteins GNAS nor GNAL. Also acts as a guanine nucleotide exchange factor (GEF) for G alpha proteins by stimulating exchange of bound GDP for free GTP. This chain is Chaperone Ric-8A (ric8a), found in Xenopus laevis (African clawed frog).